We begin with the raw amino-acid sequence, 50 residues long: Insulin (50 aa).

Disulfide bonds link Cys-7–Cys-36, Cys-19–Cys-49, and Cys-35–Cys-40.

Belongs to the insulin family. In terms of assembly, heterodimer of a B chain and an A chain linked by two disulfide bonds.

The protein localises to the secreted. Its function is as follows. Insulin decreases blood glucose concentration. It increases cell permeability to monosaccharides, amino acids and fatty acids. It accelerates glycolysis, the pentose phosphate cycle, and glycogen synthesis in liver. The chain is Insulin (ins) from Myoxocephalus scorpius (Shorthorn sculpin).